Consider the following 124-residue polypeptide: Apolipoprotein C-IV (124 aa).

The first 27 residues, 1–27 (MSLLRCRQQTLPSLCLSVLFLACFVAS), serve as a signal peptide directing secretion.

Belongs to the apolipoprotein C4 family.

Its subcellular location is the secreted. In terms of biological role, may participate in lipoprotein metabolism. This chain is Apolipoprotein C-IV (Apoc4), found in Rattus norvegicus (Rat).